We begin with the raw amino-acid sequence, 262 residues long: Apolipoprotein A-I (262 aa).

The signal sequence occupies residues 1–18 (MKFLALALTILLAAATQA). The 3 X approximate tandem repeats stretch occupies residues 32–63 (VKVAMMEYMAQVKETGQRSIDLLDDTEFKEYK). 2 tandem repeats follow at residues 64-85 (VQLSQSLDNLQQYAQTTSQSLA) and 87-107 (YSEAFGAQLTDAAAAVRAEVM). A 10 X approximate tandem repeats region spans residues 64 to 262 (VQLSQSLDNL…YETISQAMKA (199 aa)). The 3; half-length repeat unit spans residues 108–118 (KDVEDVRTQLE). A run of 5 repeats spans residues 119-140 (PKRAELKEVLDKHIDEYRKKLE), 141-162 (PLIKEIVEQRRTELEAFRVKME), 163-184 (PVVEEMRAKVSTNVEETKAKLM), 185-206 (PIVETVRAKLTERLEELRTLAA), and 207-228 (PYAEEYKEQMFKAVGEVREKVG). The 9; half-length repeat unit spans residues 229–239 (PLTNDFKGQVG). Residues 240–262 (PAAEQAKEKLMDFYETISQAMKA) form repeat 10.

It belongs to the apolipoprotein A1/A4/E family.

The protein resides in the secreted. Functionally, participates in the reverse transport of cholesterol from tissues to the liver for excretion by promoting cholesterol efflux from tissues and by acting as a cofactor for the lecithin cholesterol acyltransferase (LCAT). The chain is Apolipoprotein A-I (apoa1) from Salmo trutta (Brown trout).